The primary structure comprises 1106 residues: Inversin (1106 aa).

ANK repeat units follow at residues 13 to 42, 47 to 76, 80 to 110, 113 to 144, 148 to 177, 181 to 213, 220 to 250, 254 to 285, 288 to 317, 321 to 350, 356 to 385, 389 to 418, 422 to 451, 455 to 484, 488 to 517, and 523 to 553; these read SLAS…ELKD, FGRT…DVNR, SRRT…WMQK, EGMT…EVDT, NKQT…NIGI, EGKI…TESL, EGRT…NVTS, LFRT…TIPS, QGAT…VKDD, EGRT…DIDI, YAGT…QVDA, MKHT…RVDL, DGHS…NPNV, AGRT…DPNI, EGRT…FPNH, and ERYT…SIAA. The D-box 1 motif lies at 490–498; that stretch reads RTALHWLCN. An IQ 1 domain is found at 555-584; it reads QDIAAFKIQAVYKGYKVRKAFQERKNLLMK. A compositionally biased stretch (basic and acidic residues) spans 589-607; it reads RKDAAAKKREEESKRKEAS. Disordered regions lie at residues 589 to 615, 636 to 688, 746 to 782, and 809 to 833; these read RKDA…MQNM, LQLS…ELQS, ANGT…GNRG, and AVPK…CSPA. Polar residues-rich tracts occupy residues 636-645 and 653-666; these read LQLSNKQTDL and VSAS…NSRG. The span at 812–822 shows a compositional bias: basic residues; that stretch reads KSKRHQQKSRH. Residues 944-952 carry the D-box 2 motif; sequence RKELFRKKN. The IQ 2 domain maps to 951–980; the sequence is KNYAATVIQRTWRSYRLRQELSQLLSAKRQ.

In terms of assembly, binds calmodulin via its IQ domains. Interacts with APC2.

It is found in the cytoplasm. The protein resides in the cytoskeleton. Required for normal renal development and establishment of left-right axis. Probably acts as a molecular switch between different Wnt signaling pathways. Inhibits the canonical Wnt pathway by targeting cytoplasmic disheveled for degradation by the ubiquitin-proteasome. This suggests that it is required in renal development to oppose the repression of terminal differentiation of tubular epithelial cells by Wnt signaling. This chain is Inversin (INVS), found in Gallus gallus (Chicken).